Consider the following 224-residue polypeptide: Cytidylate kinase (224 aa).

11 to 19 (GPAAAGKST) lines the ATP pocket.

The protein belongs to the cytidylate kinase family. Type 1 subfamily.

Its subcellular location is the cytoplasm. The enzyme catalyses CMP + ATP = CDP + ADP. It catalyses the reaction dCMP + ATP = dCDP + ADP. This is Cytidylate kinase (cmk) from Bacillus subtilis (strain 168).